The chain runs to 231 residues: MSNFDSEHPRVLIPELCKLFYGNGWVTGTGGGISIKRDKEIYIAASGVQKERILGEDIFVMDENENEISTPPTEKKLKASQCTPLFFNAYKYRDAGAVIHTHSQHAVMVTLLYQTEFIITHQEMIKGILSGHGENAKYLQYFDRLVIPIIENTPHERDLKERMHKAMEKYPNANAVLVRRHGVYVWGPDWVKAKTMCECFDYLFEIAIKMKQMGLDPTEVPHANEECCYDC.

Position 82 (C82) interacts with substrate. Residues H100 and H102 each coordinate Zn(2+). The active-site Proton donor/acceptor is the E123. A Zn(2+)-binding site is contributed by H181.

It belongs to the aldolase class II family. MtnB subfamily. Zn(2+) is required as a cofactor.

Its subcellular location is the cytoplasm. The enzyme catalyses 5-(methylsulfanyl)-D-ribulose 1-phosphate = 5-methylsulfanyl-2,3-dioxopentyl phosphate + H2O. The protein operates within amino-acid biosynthesis; L-methionine biosynthesis via salvage pathway; L-methionine from S-methyl-5-thio-alpha-D-ribose 1-phosphate: step 2/6. Its function is as follows. Catalyzes the dehydration of methylthioribulose-1-phosphate (MTRu-1-P) into 2,3-diketo-5-methylthiopentyl-1-phosphate (DK-MTP-1-P). The chain is Probable methylthioribulose-1-phosphate dehydratase from Dictyostelium discoideum (Social amoeba).